The chain runs to 439 residues: Lipoyl synthase, mitochondrial (439 aa).

Residues 1 to 37 constitute a mitochondrion transit peptide; sequence MVASARGLRTLHSAHSSISALPASTVPRLQLAVSRCY. The [4Fe-4S] cluster site is built by Cys150, Cys155, Cys161, Cys181, Cys185, Cys188, and Ser396. In terms of domain architecture, Radical SAM core spans 164-385; the sequence is GSSKSAATAT…KERALEMGFL (222 aa).

The protein belongs to the radical SAM superfamily. Lipoyl synthase family. Requires [4Fe-4S] cluster as cofactor.

Its subcellular location is the mitochondrion. It catalyses the reaction [[Fe-S] cluster scaffold protein carrying a second [4Fe-4S](2+) cluster] + N(6)-octanoyl-L-lysyl-[protein] + 2 oxidized [2Fe-2S]-[ferredoxin] + 2 S-adenosyl-L-methionine + 4 H(+) = [[Fe-S] cluster scaffold protein] + N(6)-[(R)-dihydrolipoyl]-L-lysyl-[protein] + 4 Fe(3+) + 2 hydrogen sulfide + 2 5'-deoxyadenosine + 2 L-methionine + 2 reduced [2Fe-2S]-[ferredoxin]. The protein operates within protein modification; protein lipoylation via endogenous pathway; protein N(6)-(lipoyl)lysine from octanoyl-[acyl-carrier-protein]: step 2/2. Functionally, catalyzes the radical-mediated insertion of two sulfur atoms into the C-6 and C-8 positions of the octanoyl moiety bound to the lipoyl domains of lipoate-dependent enzymes, thereby converting the octanoylated domains into lipoylated derivatives. This Paracoccidioides lutzii (strain ATCC MYA-826 / Pb01) (Paracoccidioides brasiliensis) protein is Lipoyl synthase, mitochondrial.